A 173-amino-acid polypeptide reads, in one-letter code: Tumor necrosis factor ligand superfamily member 18 (173 aa).

Residues 1 to 20 lie on the Cytoplasmic side of the membrane; it reads MEEMPLRESSPQRAERCKKS. A helical; Signal-anchor for type II membrane protein membrane pass occupies residues 21–41; sequence WLLCIVALLLMLLCSLGTLIY. Residues 40–166 enclose the THD domain; sequence IYTSLKPTAI…TNTYWGIILM (127 aa). Residues 42–173 are Extracellular-facing; the sequence is TSLKPTAIES…ILMPDLPFIS (132 aa). Residues Cys-52 and Cys-72 are joined by a disulfide bond. The N-linked (GlcNAc...) asparagine glycan is linked to Asn-74.

It belongs to the tumor necrosis factor family. In terms of assembly, homotrimer. Homodimer. Post-translationally, N-glycosylated. As to expression, detected in immature and mature dendritic cells and in macrophages (at protein level). Detected in spleen, lung, heart, thymus, monocytes, macrophages, B-cells and dendritic cells.

It is found in the cell membrane. Functionally, cytokine that binds to TNFRSF18/AITR/GITR. Regulates T-cell responses. Can function as costimulator and lower the threshold for T-cell activation and T-cell proliferation. Important for interactions between activated T-lymphocytes and endothelial cells. Mediates activation of NF-kappa-B. Triggers increased phosphorylation of STAT1 and up-regulates expression of VCAM1 and ICAM1. Promotes leukocyte adhesion to endothelial cells. Regulates migration of monocytes from the splenic reservoir to sites of inflammation. This is Tumor necrosis factor ligand superfamily member 18 (Tnfsf18) from Mus musculus (Mouse).